The primary structure comprises 209 residues: Protein-L-isoaspartate O-methyltransferase (209 aa).

The active site involves Ser-59.

The protein belongs to the methyltransferase superfamily. L-isoaspartyl/D-aspartyl protein methyltransferase family. As to quaternary structure, monomer.

The protein resides in the cytoplasm. It catalyses the reaction [protein]-L-isoaspartate + S-adenosyl-L-methionine = [protein]-L-isoaspartate alpha-methyl ester + S-adenosyl-L-homocysteine. Its function is as follows. Catalyzes the methyl esterification of L-isoaspartyl residues in peptides and proteins that result from spontaneous decomposition of normal L-aspartyl and L-asparaginyl residues. It plays a role in the repair and/or degradation of damaged proteins. This is Protein-L-isoaspartate O-methyltransferase (pcm) from Helicobacter pylori (strain J99 / ATCC 700824) (Campylobacter pylori J99).